The sequence spans 141 residues: Acetyltransferase YpeA (141 aa).

The 141-residue stretch at 1-141 (MEIRVFRQED…GKRLIEDEEY (141 aa)) folds into the N-acetyltransferase domain.

The protein belongs to the acetyltransferase family. YpeA subfamily.

In Shigella boydii serotype 4 (strain Sb227), this protein is Acetyltransferase YpeA.